The following is a 198-amino-acid chain: Beta-crystallin A1-2 (198 aa).

The N-terminal arm stretch occupies residues 1–13 (MAQINPLPVPLGP). Beta/gamma crystallin 'Greek key' domains follow at residues 14–53 (WKIT…KVEC) and 54–100 (GAWI…RPIC). Residues 101 to 106 (SANHIE) form a connecting peptide region. Beta/gamma crystallin 'Greek key' domains are found at residues 107–148 (SKLV…KVQC) and 149–197 (GAWV…RRIQ).

Belongs to the beta/gamma-crystallin family. In terms of assembly, homo/heterodimer, or complexes of higher-order. The structure of beta-crystallin oligomers seems to be stabilized through interactions between the N-terminal arms. The N-terminus is blocked.

Crystallins are the dominant structural components of the vertebrate eye lens. This chain is Beta-crystallin A1-2, found in Aquarana catesbeiana (American bullfrog).